A 180-amino-acid polypeptide reads, in one-letter code: MTNLRKELEKCKHPNSRKTKALGKKARRQNNKHKVRLGHAIKSNITGEKLSWFLGQIDEGRTEPLRPQELEDLIELYFTRFDEELEQINLKQSIGKHRANQHAARKDVITMTLEKERNEFRTGGLELMNLCDPLKLKMLRDWDGSALSVQHLKLDLVSYNMLQRLKEQSKKKETSEQMET.

Positions 1-12 are enriched in basic and acidic residues; the sequence is MTNLRKELEKCK. The interval 1–32 is disordered; sequence MTNLRKELEKCKHPNSRKTKALGKKARRQNNK. Residues 13–32 are compositionally biased toward basic residues; the sequence is HPNSRKTKALGKKARRQNNK.

This sequence belongs to the TMA16 family.

The sequence is that of Translation machinery-associated protein 16 homolog from Drosophila melanogaster (Fruit fly).